Consider the following 551-residue polypeptide: Dihydroxy-acid dehydratase (551 aa).

Cysteine 52 contacts [2Fe-2S] cluster. A Mg(2+)-binding site is contributed by aspartate 84. Cysteine 125 contributes to the [2Fe-2S] cluster binding site. Aspartate 126 and lysine 127 together coordinate Mg(2+). Position 127 is an N6-carboxylysine (lysine 127). Cysteine 197 contacts [2Fe-2S] cluster. Mg(2+) is bound at residue glutamate 448. The active-site Proton acceptor is serine 474.

The protein belongs to the IlvD/Edd family. Homodimer. The cofactor is [2Fe-2S] cluster. Mg(2+) is required as a cofactor.

It carries out the reaction (2R)-2,3-dihydroxy-3-methylbutanoate = 3-methyl-2-oxobutanoate + H2O. It catalyses the reaction (2R,3R)-2,3-dihydroxy-3-methylpentanoate = (S)-3-methyl-2-oxopentanoate + H2O. Its pathway is amino-acid biosynthesis; L-isoleucine biosynthesis; L-isoleucine from 2-oxobutanoate: step 3/4. It functions in the pathway amino-acid biosynthesis; L-valine biosynthesis; L-valine from pyruvate: step 3/4. Functions in the biosynthesis of branched-chain amino acids. Catalyzes the dehydration of (2R,3R)-2,3-dihydroxy-3-methylpentanoate (2,3-dihydroxy-3-methylvalerate) into 2-oxo-3-methylpentanoate (2-oxo-3-methylvalerate) and of (2R)-2,3-dihydroxy-3-methylbutanoate (2,3-dihydroxyisovalerate) into 2-oxo-3-methylbutanoate (2-oxoisovalerate), the penultimate precursor to L-isoleucine and L-valine, respectively. This Francisella tularensis subsp. tularensis (strain FSC 198) protein is Dihydroxy-acid dehydratase.